The sequence spans 40 residues: Large ribosomal subunit protein bL36B (40 aa).

The protein belongs to the bacterial ribosomal protein bL36 family.

This Streptomyces coelicolor (strain ATCC BAA-471 / A3(2) / M145) protein is Large ribosomal subunit protein bL36B.